The following is a 297-amino-acid chain: ATP synthase gamma chain (297 aa).

The protein belongs to the ATPase gamma chain family. F-type ATPases have 2 components, CF(1) - the catalytic core - and CF(0) - the membrane proton channel. CF(1) has five subunits: alpha(3), beta(3), gamma(1), delta(1), epsilon(1). CF(0) has three main subunits: a, b and c.

The protein localises to the cell membrane. Functionally, produces ATP from ADP in the presence of a proton gradient across the membrane. The gamma chain is believed to be important in regulating ATPase activity and the flow of protons through the CF(0) complex. This chain is ATP synthase gamma chain, found in Micrococcus luteus (strain ATCC 4698 / DSM 20030 / JCM 1464 / CCM 169 / CCUG 5858 / IAM 1056 / NBRC 3333 / NCIMB 9278 / NCTC 2665 / VKM Ac-2230) (Micrococcus lysodeikticus).